We begin with the raw amino-acid sequence, 458 residues long: UDP-N-acetylmuramate--L-alanine ligase (458 aa).

ATP is bound at residue 118–124 (GTHGKTT).

It belongs to the MurCDEF family.

The protein localises to the cytoplasm. The catalysed reaction is UDP-N-acetyl-alpha-D-muramate + L-alanine + ATP = UDP-N-acetyl-alpha-D-muramoyl-L-alanine + ADP + phosphate + H(+). Its pathway is cell wall biogenesis; peptidoglycan biosynthesis. Cell wall formation. This chain is UDP-N-acetylmuramate--L-alanine ligase, found in Clostridium novyi (strain NT).